Here is an 84-residue protein sequence, read N- to C-terminus: Small ribosomal subunit protein bS20 (84 aa).

The protein belongs to the bacterial ribosomal protein bS20 family.

Its function is as follows. Binds directly to 16S ribosomal RNA. The protein is Small ribosomal subunit protein bS20 of Bacteroides fragilis (strain ATCC 25285 / DSM 2151 / CCUG 4856 / JCM 11019 / LMG 10263 / NCTC 9343 / Onslow / VPI 2553 / EN-2).